Consider the following 534-residue polypeptide: Probable bifunctional tRNA threonylcarbamoyladenosine biosynthesis protein (534 aa).

A kae1 region spans residues 1-325 (MLCLGIEGTA…YRTDEVDVPW (325 aa)). Fe cation contacts are provided by His108, His112, and Tyr129. Residues 129 to 133 (YVSGG), Asp161, Gly174, Glu178, and Asn258 each bind L-threonylcarbamoyladenylate. Asp286 lines the Fe cation pocket. Residues 335-534 (LPPDILAKGA…EIESRGRYTD (200 aa)) form the Protein kinase domain. Residues 340 to 348 (LAKGAEANI) and Lys361 each bind ATP. Asp451 acts as the Proton acceptor; for kinase activity in catalysis.

This sequence in the N-terminal section; belongs to the KAE1 / TsaD family. In the C-terminal section; belongs to the protein kinase superfamily. Tyr protein kinase family. BUD32 subfamily. Component of the KEOPS complex that consists of Kae1, Bud32, Cgi121 and Pcc1; the whole complex dimerizes. The cofactor is Fe(2+).

Its subcellular location is the cytoplasm. It carries out the reaction L-seryl-[protein] + ATP = O-phospho-L-seryl-[protein] + ADP + H(+). It catalyses the reaction L-threonyl-[protein] + ATP = O-phospho-L-threonyl-[protein] + ADP + H(+). The catalysed reaction is L-threonylcarbamoyladenylate + adenosine(37) in tRNA = N(6)-L-threonylcarbamoyladenosine(37) in tRNA + AMP + H(+). In terms of biological role, required for the formation of a threonylcarbamoyl group on adenosine at position 37 (t(6)A37) in tRNAs that read codons beginning with adenine. Is a component of the KEOPS complex that is probably involved in the transfer of the threonylcarbamoyl moiety of threonylcarbamoyl-AMP (TC-AMP) to the N6 group of A37. The Kae1 domain likely plays a direct catalytic role in this reaction. The Bud32 domain probably displays kinase activity that regulates Kae1 function. The sequence is that of Probable bifunctional tRNA threonylcarbamoyladenosine biosynthesis protein from Methanothermobacter thermautotrophicus (strain ATCC 29096 / DSM 1053 / JCM 10044 / NBRC 100330 / Delta H) (Methanobacterium thermoautotrophicum).